Here is a 183-residue protein sequence, read N- to C-terminus: Ras-related protein Rap-2a (183 aa).

Position 10–17 (10–17) interacts with GTP; it reads GSGGVGKS. Positions 32–40 match the Effector region motif; that stretch reads YDPTIEDFY. GTP is bound by residues 57 to 61 and 116 to 119; these read DTAGT and NKVD. 2 S-palmitoyl cysteine lipidation sites follow: Cys-176 and Cys-177. Cys-180 bears the Cysteine methyl ester mark. Cys-180 carries S-farnesyl cysteine lipidation. The propeptide at 181–183 is removed in mature form; it reads VIL.

Belongs to the small GTPase superfamily. Ras family. In terms of assembly, interacts (GTP-bound form) with RUNDC3A. Interacts with PLCE1. Interacts with ARHGAP29, SGSM1, SGSM2 and SGSM3. Interacts (GTP-bound form preferentially) with TNIK (via the CNH domain); the interaction is direct and recruits RAP2A to the E3 ubiquitin ligase NEDD4. Interacts with MINK1. Interacts (GTP-bound form preferentially) with MAP4K4. Interacts with cytoskeletal actin. Interacts with RGS14; the interaction is GTP-dependent. In terms of processing, ubiquitinated; undergoes 'Lys-63' monoubiquitination and diubiquitination by NEDD4. Multiple lysine residues are probably modified. Ubiquitination requires TNIK, prevents interaction with effectors and inactivates RAP2A. Ubiquitination by the ECS(RAB40B) complex leads to RAP2A localization to lamellipodia plasma membrane, activation, and regulation of sorting at early endosomes for recycling to the lamellipodia plasma membrane. Palmitoylated. Palmitoylation is required for association with recycling endosome membranes and activation of TNIK.

The protein resides in the midbody. It localises to the cell projection. Its subcellular location is the lamellipodium membrane. It is found in the golgi apparatus. The protein localises to the recycling endosome membrane. The protein resides in the lysosome. It catalyses the reaction GTP + H2O = GDP + phosphate + H(+). Its activity is regulated as follows. Activated by the guanine nucleotide-exchange factors RAPGEF3 and RAPGEF4 in a cAMP-dependent manner. Nucleotide exchange is also specifically stimulated by RAPGEF5, RASGEF1A and RASGEF1B. Its function is as follows. Small GTP-binding protein which cycles between a GDP-bound inactive and a GTP-bound active form. In its active form interacts with and regulates several effectors including MAP4K4, MINK1 and TNIK. Part of a signaling complex composed of NEDD4, RAP2A and TNIK which regulates neuronal dendrite extension and arborization during development. More generally, it is part of several signaling cascades and may regulate cytoskeletal rearrangements, cell migration, cell adhesion and cell spreading. This Sus scrofa (Pig) protein is Ras-related protein Rap-2a (RAP2A).